We begin with the raw amino-acid sequence, 79 residues long: RNA-binding protein Hfq (79 aa).

The region spanning 9-69 (DTFLNHLRKE…ISTFTPQRPV (61 aa)) is the Sm domain.

This sequence belongs to the Hfq family. As to quaternary structure, homohexamer.

Functionally, RNA chaperone that binds small regulatory RNA (sRNAs) and mRNAs to facilitate mRNA translational regulation in response to envelope stress, environmental stress and changes in metabolite concentrations. Also binds with high specificity to tRNAs. The polypeptide is RNA-binding protein Hfq (Brevibacillus brevis (strain 47 / JCM 6285 / NBRC 100599)).